Consider the following 332-residue polypeptide: L-lactate dehydrogenase A chain (332 aa).

The residue at position 2 (alanine 2) is an N-acetylalanine. An N6-acetyllysine; alternate modification is found at lysine 5. The residue at position 5 (lysine 5) is an N6-succinyllysine; alternate. At lysine 14 the chain carries N6-acetyllysine. 29–57 serves as a coordination point for NAD(+); it reads GAVGMACAISILMKDLADELALVDVMEDK. N6-acetyllysine; alternate is present on lysine 57. Lysine 57 participates in a covalent cross-link: Glycyl lysine isopeptide (Lys-Gly) (interchain with G-Cter in SUMO2); alternate. Lysine 81 bears the N6-acetyllysine mark. Arginine 99 is a binding site for NAD(+). Residue arginine 106 participates in substrate binding. Residue lysine 118 is modified to N6-acetyllysine; alternate. An N6-succinyllysine; alternate modification is found at lysine 118. Lysine 126 carries the N6-acetyllysine modification. Asparagine 138 lines the NAD(+) pocket. Residues asparagine 138 and arginine 169 each contribute to the substrate site. Histidine 193 acts as the Proton acceptor in catalysis. N6-acetyllysine is present on residues lysine 224 and lysine 232. A Phosphotyrosine modification is found at tyrosine 239. Lysine 243 carries the post-translational modification N6-acetyllysine. Threonine 248 is a binding site for substrate. The residue at position 309 (threonine 309) is a Phosphothreonine. Serine 310 is modified (phosphoserine). Lysine 318 is modified (N6-acetyllysine; alternate). Lysine 318 carries the N6-succinyllysine; alternate modification. A Phosphothreonine modification is found at threonine 322.

This sequence belongs to the LDH/MDH superfamily. LDH family. Homotetramer. Interacts with PTEN upstream reading frame protein MP31. Post-translationally, ISGylated.

The protein localises to the cytoplasm. It carries out the reaction (S)-lactate + NAD(+) = pyruvate + NADH + H(+). It functions in the pathway fermentation; pyruvate fermentation to lactate; (S)-lactate from pyruvate: step 1/1. Its function is as follows. Interconverts simultaneously and stereospecifically pyruvate and lactate with concomitant interconversion of NADH and NAD(+). The protein is L-lactate dehydrogenase A chain (LDHA) of Oryctolagus cuniculus (Rabbit).